The chain runs to 215 residues: Nascent polypeptide-associated complex subunit alpha (215 aa).

A disordered region spans residues 1–81; that stretch reads MPGEATETVP…SEKKARKAMS (81 aa). The segment covering 9–21 has biased composition (polar residues); that stretch reads VPVTEQEMQQPQV. A compositionally biased stretch (acidic residues) spans 29–42; that stretch reads SDSDDSVPELEEQD. The segment covering 43–57 has biased composition (low complexity); it reads SAQTQTQQAQLAAAA. The NAC-A/B domain occupies 70-135; sequence SRSEKKARKA…AKIEDLSQQA (66 aa). In terms of domain architecture, UBA spans 176–213; sequence VEVKDIELVMSQANVSRAKAVRALKNNNNDIVNAIMEL.

It belongs to the NAC-alpha family.

In terms of biological role, may promote appropriate targeting of ribosome-nascent polypeptide complexes. The polypeptide is Nascent polypeptide-associated complex subunit alpha (naca) (Oreochromis niloticus (Nile tilapia)).